Reading from the N-terminus, the 120-residue chain is Large ribosomal subunit protein uL18 (120 aa).

Belongs to the universal ribosomal protein uL18 family. Part of the 50S ribosomal subunit; part of the 5S rRNA/L5/L18/L25 subcomplex. Contacts the 5S and 23S rRNAs.

Functionally, this is one of the proteins that bind and probably mediate the attachment of the 5S RNA into the large ribosomal subunit, where it forms part of the central protuberance. The protein is Large ribosomal subunit protein uL18 of Gluconacetobacter diazotrophicus (strain ATCC 49037 / DSM 5601 / CCUG 37298 / CIP 103539 / LMG 7603 / PAl5).